A 1093-amino-acid chain; its full sequence is Phosphorylase b kinase regulatory subunit beta (1093 aa).

An N-acetylalanine modification is found at Ala-2. Phosphoserine is present on Ala-4. Residues 7–29 (LTAEVSWKVLERRARTKRSGSVY) form a calmodulin-binding region. Ser-12 is modified (phosphoserine; by autocatalysis). Phosphoserine occurs at positions 27 and 701. A disordered region spans residues 689–716 (EPPKHSKVKRQSSTPSAPELGQQPDVNI). 2 calmodulin-binding regions span residues 768–795 (RVYRRAGSQKLWLAVRYGAAFTQKFSSS) and 920–951 (NGRCWLNRRQIDGSLNRTPTGFYDRVWQILER). Cys-1090 carries the S-farnesyl cysteine lipid modification.

This sequence belongs to the phosphorylase b kinase regulatory chain family. Hexadecamer of 4 heterotetramers, each composed of alpha, beta, gamma, and delta subunits. Alpha (PHKA1 or PHKA2) and beta (PHKB) are regulatory subunits, gamma (PHKG1 or PHKG2) is the catalytic subunit, and delta is calmodulin. Post-translationally, ser-701 is probably phosphorylated by PKA. Although the final Cys may be farnesylated, the terminal tripeptide is probably not removed, and the C-terminus is not methylated.

It localises to the cell membrane. Its pathway is glycan biosynthesis; glycogen metabolism. By phosphorylation of various serine residues. Its function is as follows. Phosphorylase b kinase catalyzes the phosphorylation of serine in certain substrates, including troponin I. The beta chain acts as a regulatory unit and modulates the activity of the holoenzyme in response to phosphorylation. The protein is Phosphorylase b kinase regulatory subunit beta (PHKB) of Homo sapiens (Human).